Reading from the N-terminus, the 555-residue chain is Arginine--tRNA ligase (555 aa).

Residues 117–127 (ANPNGPLHVGH) carry the 'HIGH' region motif.

It belongs to the class-I aminoacyl-tRNA synthetase family.

The protein localises to the cytoplasm. The catalysed reaction is tRNA(Arg) + L-arginine + ATP = L-arginyl-tRNA(Arg) + AMP + diphosphate. In Methanospirillum hungatei JF-1 (strain ATCC 27890 / DSM 864 / NBRC 100397 / JF-1), this protein is Arginine--tRNA ligase.